Consider the following 286-residue polypeptide: Forkhead box protein E3 (286 aa).

The tract at residues 1-62 is disordered; sequence MDAHVAFSGF…GRRRRRPLQR (62 aa). The fork-head DNA-binding region spans 64–158; it reads KPPYSYIALI…DNGSFLRRRK (95 aa).

The protein resides in the nucleus. Transcription factor that controls lens epithelial cell growth through regulation of proliferation, apoptosis and cell cycle. During lens development, controls the ratio of the lens fiber cells to the cells of the anterior lens epithelium by regulating the rate of proliferation and differentiation. Controls lens vesicle closure and subsequent separation of the lens vesicle from ectoderm. Controls the expression of DNAJB1 in a pathway that is crucial for the development of the anterior segment of the eye. In Rattus norvegicus (Rat), this protein is Forkhead box protein E3 (Foxe3).